A 270-amino-acid polypeptide reads, in one-letter code: Glutamate racemase (270 aa).

Residues 14 to 15 and 46 to 47 contribute to the substrate site; these read DS and YG. The active-site Proton donor/acceptor is Cys77. 78–79 provides a ligand contact to substrate; it reads NT. Cys186 functions as the Proton donor/acceptor in the catalytic mechanism. 187–188 contacts substrate; the sequence is TH.

The protein belongs to the aspartate/glutamate racemases family.

It carries out the reaction L-glutamate = D-glutamate. It participates in cell wall biogenesis; peptidoglycan biosynthesis. In terms of biological role, provides the (R)-glutamate required for cell wall biosynthesis. In Trichodesmium erythraeum (strain IMS101), this protein is Glutamate racemase.